Reading from the N-terminus, the 465-residue chain is 3-isopropylmalate dehydratase large subunit (465 aa).

Positions 347, 407, and 410 each coordinate [4Fe-4S] cluster. Residues 416–443 (DTLRPGERSASTSNRNFEGRQGPGGRTH) are disordered.

It belongs to the aconitase/IPM isomerase family. LeuC type 1 subfamily. Heterodimer of LeuC and LeuD. [4Fe-4S] cluster is required as a cofactor.

It carries out the reaction (2R,3S)-3-isopropylmalate = (2S)-2-isopropylmalate. The protein operates within amino-acid biosynthesis; L-leucine biosynthesis; L-leucine from 3-methyl-2-oxobutanoate: step 2/4. In terms of biological role, catalyzes the isomerization between 2-isopropylmalate and 3-isopropylmalate, via the formation of 2-isopropylmaleate. The polypeptide is 3-isopropylmalate dehydratase large subunit (Frankia alni (strain DSM 45986 / CECT 9034 / ACN14a)).